A 160-amino-acid polypeptide reads, in one-letter code: Glucan endo-1,3-beta-glucosidase, acidic isoform PR-O (160 aa).

Residue glutamate 81 is the Nucleophile of the active site.

Belongs to the glycosyl hydrolase 17 family. The N-terminus is blocked.

Its subcellular location is the secreted. It is found in the extracellular space. The catalysed reaction is Hydrolysis of (1-&gt;3)-beta-D-glucosidic linkages in (1-&gt;3)-beta-D-glucans.. Functionally, implicated in the defense of plants against pathogens. This chain is Glucan endo-1,3-beta-glucosidase, acidic isoform PR-O (PR0), found in Nicotiana tabacum (Common tobacco).